The sequence spans 152 residues: UPF0266 membrane protein YobD (152 aa).

3 consecutive transmembrane segments (helical) span residues 6–26 (LVLI…QFIM), 45–65 (VDSV…VTSH), and 67–87 (AQMT…IFWI).

The protein belongs to the UPF0266 family.

It is found in the cell inner membrane. The polypeptide is UPF0266 membrane protein YobD (Salmonella paratyphi A (strain ATCC 9150 / SARB42)).